Here is a 940-residue protein sequence, read N- to C-terminus: UvrABC system protein A (940 aa).

ATP is bound at residue 31-38 (GLSGSGKS). The segment at 253–280 (CPICGYSMRELEPRLFSFNNPAGACPTC) adopts a C4-type zinc-finger fold. 2 consecutive ABC transporter domains span residues 310-587 (WDRR…PESL) and 607-937 (ANPE…RFLK). Position 640-647 (640-647 (GVSGSGKS)) interacts with ATP. The C4-type zinc finger occupies 740 to 766 (CEACQGDGVIKVEMHFLPDIYVPCDQC).

This sequence belongs to the ABC transporter superfamily. UvrA family. Forms a heterotetramer with UvrB during the search for lesions.

It is found in the cytoplasm. Functionally, the UvrABC repair system catalyzes the recognition and processing of DNA lesions. UvrA is an ATPase and a DNA-binding protein. A damage recognition complex composed of 2 UvrA and 2 UvrB subunits scans DNA for abnormalities. When the presence of a lesion has been verified by UvrB, the UvrA molecules dissociate. Plays a role in recovery after DNA ADP-ribosylation. This chain is UvrABC system protein A, found in Escherichia coli O127:H6 (strain E2348/69 / EPEC).